We begin with the raw amino-acid sequence, 452 residues long: Glycylpeptide N-tetradecanoyltransferase (452 aa).

Tetradecanoyl-CoA contacts are provided by residues 38–41 (YKFW), 171–173 (LCI), and 179–183 (SKRLA). Leucine 452 functions as the Proton acceptor; via carboxylate in the catalytic mechanism.

This sequence belongs to the NMT family. Monomer.

The protein resides in the cytoplasm. The catalysed reaction is N-terminal glycyl-[protein] + tetradecanoyl-CoA = N-tetradecanoylglycyl-[protein] + CoA + H(+). In terms of biological role, adds a myristoyl group to the N-terminal glycine residue of certain cellular proteins. The chain is Glycylpeptide N-tetradecanoyltransferase (NMT1) from Eremothecium gossypii (strain ATCC 10895 / CBS 109.51 / FGSC 9923 / NRRL Y-1056) (Yeast).